Here is a 204-residue protein sequence, read N- to C-terminus: MASVNGPLRVGIGGPVGSGKTALMEQLCRRFRDSYEICAITNDIYTKEDARILTVAGALPEERILGVETGGCPHTAIREDASINLAAVAEMRRRFPKLDLVLIESGGDNLAATFSPELADLTLYVIDVAGGEKIPRKGGPGITRSDLLIVNKTDLAPLVGADLSVMEADTQRMRGTRPYVFASLREGHGADTVARFIVEAGGLG.

Residue 14 to 21 coordinates GTP; the sequence is GPVGSGKT.

The protein belongs to the SIMIBI class G3E GTPase family. UreG subfamily. As to quaternary structure, homodimer. UreD, UreF and UreG form a complex that acts as a GTP-hydrolysis-dependent molecular chaperone, activating the urease apoprotein by helping to assemble the nickel containing metallocenter of UreC. The UreE protein probably delivers the nickel.

Its subcellular location is the cytoplasm. Functionally, facilitates the functional incorporation of the urease nickel metallocenter. This process requires GTP hydrolysis, probably effectuated by UreG. In Methylorubrum extorquens (strain PA1) (Methylobacterium extorquens), this protein is Urease accessory protein UreG 1.